Consider the following 226-residue polypeptide: UPF0111 protein AF_1799 (226 aa).

It belongs to the UPF0111 family.

This chain is UPF0111 protein AF_1799, found in Archaeoglobus fulgidus (strain ATCC 49558 / DSM 4304 / JCM 9628 / NBRC 100126 / VC-16).